The following is a 567-amino-acid chain: Potassium-transporting ATPase potassium-binding subunit (567 aa).

11 consecutive transmembrane segments (helical) span residues 3–23, 64–84, 136–156, 179–199, 254–274, 285–305, 330–350, 357–376, 421–441, 473–495, and 527–547; these read FIGWCQIALFGAVVVALVKPL, LTFTLAMLLFHIGGFAIIYAV, ALTHQNFLSAATGIVLAMALI, LYVLLPICIPYALFLVWQGMP, LSNFVQMLSIFVLGAALTNVF, WAILGVMGVLFVVGIAVAYWA, FGIVASALFAVVTTAASCGAV, FTALGGMIPLINMQLGEIIV, MLAILVLPLMYLGWTAIAVVL, AFGGLTGNTFFYNLTLATAMFVG, and GGLFVGLVVGVILIIGGLTFF.

Belongs to the KdpA family. As to quaternary structure, the system is composed of three essential subunits: KdpA, KdpB and KdpC.

It localises to the cell inner membrane. In terms of biological role, part of the high-affinity ATP-driven potassium transport (or Kdp) system, which catalyzes the hydrolysis of ATP coupled with the electrogenic transport of potassium into the cytoplasm. This subunit binds the periplasmic potassium ions and delivers the ions to the membrane domain of KdpB through an intramembrane tunnel. The polypeptide is Potassium-transporting ATPase potassium-binding subunit (Rhodopseudomonas palustris (strain ATCC BAA-98 / CGA009)).